Consider the following 277-residue polypeptide: MRSPWADDVEYQKDPLFLNYEKRIWDNSTNQTTFSWHKDTREIASSSILALALVHDVWGPVIAACSIDARWAASDIYVIPTNSTVVFSNTTDSLMESLRHSNQGNREANIAKYGLSRNPIDIQLEWAEKLNRKYIFDLSVKPSQRMKAAPNEEINAIETFLMDIIPSMRVDPSVSTLLGLIVSDSISRTINTTRAPWGMVEEVDSNGSWNYSEVVRNSGNENRPNPDDDNGYVMRVIADRYGYGFALRVRFGVLYLESLPNGLVPIGDIFVLVWDLN.

It functions in the pathway secondary metabolite biosynthesis. Its function is as follows. Part of the gene cluster that mediates the biosynthesis of squalestatin S1 (SQS1, also known as zaragozic acid A), a heavily oxidized fungal polyketide that offers potent cholesterol lowering activity by targeting squalene synthase (SS). SQS1 is composed of a 2,8-dioxobicyclic[3.2.1]octane-3,4,5-tricarboxyclic acid core that is connected to two lipophilic polyketide arms. These initial steps feature the priming of an unusual benzoic acid starter unit onto the highly reducing polyketide synthase clz14, followed by oxaloacetate extension and product release to generate a tricarboxylic acid containing product. The phenylalanine ammonia lyase (PAL) clz10 and the acyl-CoA ligase clz12 are involved in transforming phenylalanine into benzoyl-CoA. The citrate synthase-like protein clz17 is involved in connecting the C-alpha-carbons of the hexaketide chain and oxaloacetate to afford the tricarboxylic acid unit. The potential hydrolytic enzymes, clz11 and clz13, are in close proximity to pks2 and may participate in product release. On the other side, the tetraketide arm is synthesized by a the squalestatin tetraketide synthase clz2 and enzymatically esterified to the core in the last biosynthetic step, by the acetyltransferase clz6. The biosynthesis of the tetraketide must involve 3 rounds of chain extension. After the first and second rounds methyl-transfer occurs, and in all rounds of extension the ketoreductase and dehydratase are active. The enoyl reductase and C-MeT of clz2 are not active in the final round of extension. The acetyltransferase clz6 appears to have a broad substrate selectivity for its acyl CoA substrate, allowing the in vitro synthesis of novel squalestatins. The biosynthesis of SQS1 requires several oxidative steps likely performed by oxidoreductases clz3, clz15 and clz16. Finally, in support of the identification of the cluster as being responsible for SQS1 production, the cluster contains a gene encoding a putative squalene synthase (SS) clz20, suggesting a likely mechanism for self-resistance. The protein is Zaragozic acid A biosynthesis cluster protein 1 of Cochliobolus lunatus (Filamentous fungus).